Reading from the N-terminus, the 268-residue chain is NADH-quinone oxidoreductase subunit B 2 (268 aa).

Residues Cys42, Cys43, Cys108, and Cys138 each coordinate [4Fe-4S] cluster. A disordered region spans residues 237–268; it reads SPNKAKGVAPEIRHNDLKRPAVEVDHARDEQR. Residues 247–268 are compositionally biased toward basic and acidic residues; sequence EIRHNDLKRPAVEVDHARDEQR.

This sequence belongs to the complex I 20 kDa subunit family. As to quaternary structure, NDH-1 is composed of 14 different subunits. Subunits NuoB, C, D, E, F, and G constitute the peripheral sector of the complex. [4Fe-4S] cluster is required as a cofactor.

It is found in the cell membrane. It catalyses the reaction a quinone + NADH + 5 H(+)(in) = a quinol + NAD(+) + 4 H(+)(out). In terms of biological role, NDH-1 shuttles electrons from NADH, via FMN and iron-sulfur (Fe-S) centers, to quinones in the respiratory chain. The immediate electron acceptor for the enzyme in this species is believed to be ubiquinone. Couples the redox reaction to proton translocation (for every two electrons transferred, four hydrogen ions are translocated across the cytoplasmic membrane), and thus conserves the redox energy in a proton gradient. This chain is NADH-quinone oxidoreductase subunit B 2, found in Roseiflexus castenholzii (strain DSM 13941 / HLO8).